The following is an 803-amino-acid chain: Phosphoribosylformylglycinamidine synthase subunit PurL (803 aa).

The active site involves H65. ATP-binding residues include Y68 and K107. E109 lines the Mg(2+) pocket. Residues 110–113 and R132 each bind substrate; that span reads SHNH. H111 acts as the Proton acceptor in catalysis. Residue D133 participates in Mg(2+) binding. Residue Q256 participates in substrate binding. D284 serves as a coordination point for Mg(2+). 328–330 provides a ligand contact to substrate; that stretch reads ESQ. Residues N537 and G574 each coordinate ATP. N575 is a Mg(2+) binding site. Residue S577 participates in substrate binding.

Belongs to the FGAMS family. Monomer. Part of the FGAM synthase complex composed of 1 PurL, 1 PurQ and 2 PurS subunits.

Its subcellular location is the cytoplasm. It carries out the reaction N(2)-formyl-N(1)-(5-phospho-beta-D-ribosyl)glycinamide + L-glutamine + ATP + H2O = 2-formamido-N(1)-(5-O-phospho-beta-D-ribosyl)acetamidine + L-glutamate + ADP + phosphate + H(+). It participates in purine metabolism; IMP biosynthesis via de novo pathway; 5-amino-1-(5-phospho-D-ribosyl)imidazole from N(2)-formyl-N(1)-(5-phospho-D-ribosyl)glycinamide: step 1/2. Its function is as follows. Part of the phosphoribosylformylglycinamidine synthase complex involved in the purines biosynthetic pathway. Catalyzes the ATP-dependent conversion of formylglycinamide ribonucleotide (FGAR) and glutamine to yield formylglycinamidine ribonucleotide (FGAM) and glutamate. The FGAM synthase complex is composed of three subunits. PurQ produces an ammonia molecule by converting glutamine to glutamate. PurL transfers the ammonia molecule to FGAR to form FGAM in an ATP-dependent manner. PurS interacts with PurQ and PurL and is thought to assist in the transfer of the ammonia molecule from PurQ to PurL. This chain is Phosphoribosylformylglycinamidine synthase subunit PurL, found in Prochlorococcus marinus (strain NATL2A).